We begin with the raw amino-acid sequence, 463 residues long: Phosphomethylpyrimidine synthase (463 aa).

Residues Asn80, Met109, Tyr138, His173, 193 to 195 (SRG), 234 to 237 (DGLR), and Glu273 each bind substrate. His277 is a binding site for Zn(2+). Tyr300 contacts substrate. Residue His341 participates in Zn(2+) binding. Residues Cys421, Cys424, and Cys429 each contribute to the [4Fe-4S] cluster site.

The protein belongs to the ThiC family. As to quaternary structure, homodimer. The cofactor is [4Fe-4S] cluster.

The enzyme catalyses 5-amino-1-(5-phospho-beta-D-ribosyl)imidazole + S-adenosyl-L-methionine = 4-amino-2-methyl-5-(phosphooxymethyl)pyrimidine + CO + 5'-deoxyadenosine + formate + L-methionine + 3 H(+). It functions in the pathway cofactor biosynthesis; thiamine diphosphate biosynthesis. Its function is as follows. Catalyzes the synthesis of the hydroxymethylpyrimidine phosphate (HMP-P) moiety of thiamine from aminoimidazole ribotide (AIR) in a radical S-adenosyl-L-methionine (SAM)-dependent reaction. The sequence is that of Phosphomethylpyrimidine synthase from Anaeromyxobacter sp. (strain K).